The following is a 273-amino-acid chain: 2,3,4,5-tetrahydropyridine-2,6-dicarboxylate N-succinyltransferase (273 aa).

Arg-104 and Asp-141 together coordinate substrate.

The protein belongs to the transferase hexapeptide repeat family. As to quaternary structure, homotrimer.

The protein resides in the cytoplasm. The enzyme catalyses (S)-2,3,4,5-tetrahydrodipicolinate + succinyl-CoA + H2O = (S)-2-succinylamino-6-oxoheptanedioate + CoA. The protein operates within amino-acid biosynthesis; L-lysine biosynthesis via DAP pathway; LL-2,6-diaminopimelate from (S)-tetrahydrodipicolinate (succinylase route): step 1/3. This is 2,3,4,5-tetrahydropyridine-2,6-dicarboxylate N-succinyltransferase from Blochmanniella pennsylvanica (strain BPEN).